The following is a 217-amino-acid chain: Protein LURP-one-related 2 (217 aa).

This sequence belongs to the LOR family.

Might be related to the phospholipid scramblase and tubby-like superfamily of membrane tethered transcription factors. The polypeptide is Protein LURP-one-related 2 (Arabidopsis thaliana (Mouse-ear cress)).